The primary structure comprises 138 residues: MGKKVLAVVKLALPAGKATPAPPVGPALGQYGVNLVMFTKEYNAKTADQIGLIIPAQITIYEDKSYSFILKTPPASVLLKRAAQIEKGSNNGTIVASITQEQLQQIALTKLPDLNTKDVKKAMSIISGTAANMGIQIL.

Belongs to the universal ribosomal protein uL11 family. Part of the ribosomal stalk of the 50S ribosomal subunit. Interacts with L10 and the large rRNA to form the base of the stalk. L10 forms an elongated spine to which L12 dimers bind in a sequential fashion forming a multimeric L10(L12)X complex.

It localises to the plastid. It is found in the chloroplast. In terms of biological role, forms part of the ribosomal stalk which helps the ribosome interact with GTP-bound translation factors. The sequence is that of Large ribosomal subunit protein uL11c from Cyanidioschyzon merolae (strain NIES-3377 / 10D) (Unicellular red alga).